We begin with the raw amino-acid sequence, 319 residues long: Malate dehydrogenase (319 aa).

NAD(+)-binding positions include 10–15 (GSGNIG) and aspartate 34. The substrate site is built by arginine 83 and arginine 89. NAD(+)-binding positions include asparagine 96 and 119 to 121 (ITN). Asparagine 121 and arginine 152 together coordinate substrate. The Proton acceptor role is filled by histidine 176.

This sequence belongs to the LDH/MDH superfamily. MDH type 3 family.

It carries out the reaction (S)-malate + NAD(+) = oxaloacetate + NADH + H(+). Its function is as follows. Catalyzes the reversible oxidation of malate to oxaloacetate. The protein is Malate dehydrogenase of Paramagnetospirillum magneticum (strain ATCC 700264 / AMB-1) (Magnetospirillum magneticum).